A 339-amino-acid polypeptide reads, in one-letter code: Ketol-acid reductoisomerase (NADP(+)) (339 aa).

The KARI N-terminal Rossmann domain occupies Met1–Thr182. Residues Tyr24–Gln27, Arg48, Ser51, Ser53, and Asp83–Gln86 each bind NADP(+). His108 is a catalytic residue. Gly134 contacts NADP(+). Residues Thr183–Ile328 form the KARI C-terminal knotted domain. Mg(2+) is bound by residues Asp191, Glu195, Glu227, and Glu231. Ser252 contributes to the substrate binding site.

Belongs to the ketol-acid reductoisomerase family. Requires Mg(2+) as cofactor.

It catalyses the reaction (2R)-2,3-dihydroxy-3-methylbutanoate + NADP(+) = (2S)-2-acetolactate + NADPH + H(+). It carries out the reaction (2R,3R)-2,3-dihydroxy-3-methylpentanoate + NADP(+) = (S)-2-ethyl-2-hydroxy-3-oxobutanoate + NADPH + H(+). It functions in the pathway amino-acid biosynthesis; L-isoleucine biosynthesis; L-isoleucine from 2-oxobutanoate: step 2/4. Its pathway is amino-acid biosynthesis; L-valine biosynthesis; L-valine from pyruvate: step 2/4. Its function is as follows. Involved in the biosynthesis of branched-chain amino acids (BCAA). Catalyzes an alkyl-migration followed by a ketol-acid reduction of (S)-2-acetolactate (S2AL) to yield (R)-2,3-dihydroxy-isovalerate. In the isomerase reaction, S2AL is rearranged via a Mg-dependent methyl migration to produce 3-hydroxy-3-methyl-2-ketobutyrate (HMKB). In the reductase reaction, this 2-ketoacid undergoes a metal-dependent reduction by NADPH to yield (R)-2,3-dihydroxy-isovalerate. The sequence is that of Ketol-acid reductoisomerase (NADP(+)) from Nitrobacter winogradskyi (strain ATCC 25391 / DSM 10237 / CIP 104748 / NCIMB 11846 / Nb-255).